Reading from the N-terminus, the 82-residue chain is U1-theraphotoxin-Ct1b (82 aa).

Positions 1–23 (MRTFTLIAILTCALLVIYHAAEA) are cleaved as a signal peptide. A propeptide spanning residues 24–44 (EELEAKDVIESKALATLDEER) is cleaved from the precursor.

It belongs to the neurotoxin 12 (Hwtx-2) family. 03 (juruin) subfamily. Post-translationally, contains 3 disulfide bonds. Two different connectivities are observed in similar proteins (C1-C3, C2-C5, C4-C6 or C1-C4, C2-C5, C3-C6). As to expression, expressed by the venom gland.

Its subcellular location is the secreted. This toxin causes paralysis and death to sheep blowflies. It does not target insect sodium channels. The chain is U1-theraphotoxin-Ct1b from Coremiocnemis tropix (Australian tarantula spider).